We begin with the raw amino-acid sequence, 208 residues long: ATP-dependent Clp protease proteolytic subunit (208 aa).

Ser106 functions as the Nucleophile in the catalytic mechanism. The active site involves His131.

This sequence belongs to the peptidase S14 family. As to quaternary structure, fourteen ClpP subunits assemble into 2 heptameric rings which stack back to back to give a disk-like structure with a central cavity, resembling the structure of eukaryotic proteasomes.

It localises to the cytoplasm. The enzyme catalyses Hydrolysis of proteins to small peptides in the presence of ATP and magnesium. alpha-casein is the usual test substrate. In the absence of ATP, only oligopeptides shorter than five residues are hydrolyzed (such as succinyl-Leu-Tyr-|-NHMec, and Leu-Tyr-Leu-|-Tyr-Trp, in which cleavage of the -Tyr-|-Leu- and -Tyr-|-Trp bonds also occurs).. Its function is as follows. Cleaves peptides in various proteins in a process that requires ATP hydrolysis. Has a chymotrypsin-like activity. Plays a major role in the degradation of misfolded proteins. This Dinoroseobacter shibae (strain DSM 16493 / NCIMB 14021 / DFL 12) protein is ATP-dependent Clp protease proteolytic subunit.